Reading from the N-terminus, the 60-residue chain is Large ribosomal subunit protein uL30 (60 aa).

This sequence belongs to the universal ribosomal protein uL30 family. Part of the 50S ribosomal subunit.

The polypeptide is Large ribosomal subunit protein uL30 (Polaromonas naphthalenivorans (strain CJ2)).